The primary structure comprises 209 residues: uncharacterized protein (209 aa).

This is an uncharacterized protein from Klebsiella pneumoniae.